Here is a 90-residue protein sequence, read N- to C-terminus: Large ribosomal subunit protein eL37 (90 aa).

Residues 13–46 (NKSHTLCNRCGRRSFHVQKKTCSSCGYPAAKMRS) form an A20-type zinc finger. Residues Cys-19, Cys-22, Cys-34, and Cys-37 each coordinate Zn(2+).

The protein belongs to the eukaryotic ribosomal protein eL37 family. Component of the large ribosomal subunit. Mature ribosomes consist of a small (40S) and a large (60S) subunit. The 40S subunit contains about 32 different proteins and 1 molecule of RNA (18S). The 60S subunit contains 45 different proteins and 3 molecules of RNA (25S, 5.8S and 5S). Zn(2+) serves as cofactor.

The protein resides in the cytoplasm. Component of the ribosome, a large ribonucleoprotein complex responsible for the synthesis of proteins in the cell. The small ribosomal subunit (SSU) binds messenger RNAs (mRNAs) and translates the encoded message by selecting cognate aminoacyl-transfer RNA (tRNA) molecules. The large subunit (LSU) contains the ribosomal catalytic site termed the peptidyl transferase center (PTC), which catalyzes the formation of peptide bonds, thereby polymerizing the amino acids delivered by tRNAs into a polypeptide chain. The nascent polypeptides leave the ribosome through a tunnel in the LSU and interact with protein factors that function in enzymatic processing, targeting, and the membrane insertion of nascent chains at the exit of the ribosomal tunnel. This chain is Large ribosomal subunit protein eL37, found in Candida albicans (strain SC5314 / ATCC MYA-2876) (Yeast).